The primary structure comprises 449 residues: Type 3 secretion system ATPase (449 aa).

Glycine 178–threonine 183 provides a ligand contact to ATP.

This sequence belongs to the ATPase alpha/beta chains family. T3SS ATPase subfamily. As to quaternary structure, the core secretion machinery of the T3SS is composed of approximately 20 different proteins, including cytoplasmic components, a base, an export apparatus and a needle. This subunit is part of the cytosolic complex. Forms homododecamers.

It is found in the cytoplasm. It carries out the reaction ATP + H2O + cellular proteinSide 1 = ADP + phosphate + cellular proteinSide 2.. ATPase component of the type III secretion system (T3SS), also called injectisome, which is used to inject bacterial effector proteins into eukaryotic host cells. Acts as a molecular motor to provide the energy that is required for the export of proteins. Required for type III secretion apparatus (T3SA) formation, proper protein secretion, host cell invasion and virulence. May play a critical role in T3SS substrate recognition, disassembly of the effector/chaperone complex and unfolding of the effector in an ATP-dependent manner prior to secretion. In Pseudomonas syringae pv. tomato (strain ATCC BAA-871 / DC3000), this protein is Type 3 secretion system ATPase.